The sequence spans 126 residues: Small ribosomal subunit protein uS13 (126 aa).

Positions 98–126 are disordered; that stretch reads PLRGQSTKNNARTRKGKKKTVANKKKATK. Basic residues predominate over residues 108–126; it reads ARTRKGKKKTVANKKKATK.

The protein belongs to the universal ribosomal protein uS13 family. In terms of assembly, part of the 30S ribosomal subunit. Forms a loose heterodimer with protein S19. Forms two bridges to the 50S subunit in the 70S ribosome.

Located at the top of the head of the 30S subunit, it contacts several helices of the 16S rRNA. In the 70S ribosome it contacts the 23S rRNA (bridge B1a) and protein L5 of the 50S subunit (bridge B1b), connecting the 2 subunits; these bridges are implicated in subunit movement. Contacts the tRNAs in the A and P-sites. The sequence is that of Small ribosomal subunit protein uS13 from Parabacteroides distasonis (strain ATCC 8503 / DSM 20701 / CIP 104284 / JCM 5825 / NCTC 11152).